Consider the following 494-residue polypeptide: 1-aminocyclopropane-1-carboxylate synthase 2 (494 aa).

Lysine 279 is modified (N6-(pyridoxal phosphate)lysine). A disordered region spans residues 474 to 494 (NVLNSPHTMSPHSPLVRARTY). Residues 475–484 (VLNSPHTMSP) are compositionally biased toward polar residues.

Belongs to the class-I pyridoxal-phosphate-dependent aminotransferase family. As to quaternary structure, homodimer. Requires pyridoxal 5'-phosphate as cofactor.

The catalysed reaction is S-adenosyl-L-methionine = 1-aminocyclopropane-1-carboxylate + S-methyl-5'-thioadenosine + H(+). It functions in the pathway alkene biosynthesis; ethylene biosynthesis via S-adenosyl-L-methionine; ethylene from S-adenosyl-L-methionine: step 1/2. Functionally, catalyzes the formation of 1-aminocyclopropane-1-carboxylate, a direct precursor of ethylene in higher plants. This is 1-aminocyclopropane-1-carboxylate synthase 2 (ACS2) from Cucurbita pepo (Vegetable marrow).